A 244-amino-acid polypeptide reads, in one-letter code: Probable transcriptional regulatory protein TT_C0469 (244 aa).

Belongs to the TACO1 family.

The protein resides in the cytoplasm. The chain is Probable transcriptional regulatory protein TT_C0469 from Thermus thermophilus (strain ATCC BAA-163 / DSM 7039 / HB27).